A 280-amino-acid chain; its full sequence is 2-C-methyl-D-erythritol 4-phosphate cytidylyltransferase (280 aa).

The protein belongs to the IspD/TarI cytidylyltransferase family. IspD subfamily.

The catalysed reaction is 2-C-methyl-D-erythritol 4-phosphate + CTP + H(+) = 4-CDP-2-C-methyl-D-erythritol + diphosphate. Its pathway is isoprenoid biosynthesis; isopentenyl diphosphate biosynthesis via DXP pathway; isopentenyl diphosphate from 1-deoxy-D-xylulose 5-phosphate: step 2/6. Its function is as follows. Catalyzes the formation of 4-diphosphocytidyl-2-C-methyl-D-erythritol from CTP and 2-C-methyl-D-erythritol 4-phosphate (MEP). The protein is 2-C-methyl-D-erythritol 4-phosphate cytidylyltransferase of Psychrobacter cryohalolentis (strain ATCC BAA-1226 / DSM 17306 / VKM B-2378 / K5).